The chain runs to 170 residues: ATP synthase subunit b (170 aa).

Residues 25-45 form a helical membrane-spanning segment; that stretch reads LIPNGTFFAVLIIFLIVLGVI. Positions 121–147 are disordered; that stretch reads EVAQTLTQADQQLSAQGDQVRSGLESS. Over residues 122-139 the composition is skewed to polar residues; it reads VAQTLTQADQQLSAQGDQ.

This sequence belongs to the ATPase B chain family. As to quaternary structure, F-type ATPases have 2 components, F(1) - the catalytic core - and F(0) - the membrane proton channel. F(1) has five subunits: alpha(3), beta(3), gamma(1), delta(1), epsilon(1). F(0) has three main subunits: a(1), b(2) and c(10-14). The alpha and beta chains form an alternating ring which encloses part of the gamma chain. F(1) is attached to F(0) by a central stalk formed by the gamma and epsilon chains, while a peripheral stalk is formed by the delta and b chains.

It localises to the cell membrane. Its function is as follows. F(1)F(0) ATP synthase produces ATP from ADP in the presence of a proton or sodium gradient. F-type ATPases consist of two structural domains, F(1) containing the extramembraneous catalytic core and F(0) containing the membrane proton channel, linked together by a central stalk and a peripheral stalk. During catalysis, ATP synthesis in the catalytic domain of F(1) is coupled via a rotary mechanism of the central stalk subunits to proton translocation. In terms of biological role, component of the F(0) channel, it forms part of the peripheral stalk, linking F(1) to F(0). This chain is ATP synthase subunit b, found in Mycolicibacterium smegmatis (strain ATCC 700084 / mc(2)155) (Mycobacterium smegmatis).